The sequence spans 216 residues: UDP-N-acetylglucosamine transferase subunit ALG14 (216 aa).

At 1-3 (MVC) the chain is on the lumenal side. The helical transmembrane segment at 4–24 (VLTLAASAGGLAVLLIVRLWA) threads the bilayer. The Cytoplasmic segment spans residues 25–216 (VLRSHPVTPR…PKSVYLGRIV (192 aa)).

The protein belongs to the ALG14 family. Forms with ALG13 the active heterodimeric UDP-N-acetylglucosamine transferase complex.

It localises to the endoplasmic reticulum membrane. In terms of biological role, part of the UDP-N-acetylglucosamine transferase complex that operates in the biosynthetic pathway of dolichol-linked oligosaccharides, the glycan precursors employed in protein asparagine (N)-glycosylation. The assembly of dolichol-linked oligosaccharides begins on the cytosolic side of the endoplasmic reticulum membrane and finishes in its lumen. The sequential addition of sugars to dolichol pyrophosphate produces dolichol-linked oligosaccharides containing fourteen sugars, including two GlcNAcs, nine mannoses and three glucoses. Once assembled, the oligosaccharides are transferred from the lipid to nascent proteins by oligosaccharyltransferases. Functions as a protein-membrane adapter recruiting ALG13 at the cytoplasmic face of the endoplasmic reticulum, where the complex catalyzes the second step of dolichol pyrophosphate biosynthesis, transferring a beta1,4-linked N-acetylglucosamine (GlcNAc) from UDP-GlcNAc to GlcNAc-pyrophosphatedolichol (Gn-PDol) to produce N,N'-diacetylchitobiosyl diphosphodolichol. N,N'-diacetylchitobiosyl diphosphodolichol is a substrate for ALG1, the following enzyme in the biosynthetic pathway. The protein is UDP-N-acetylglucosamine transferase subunit ALG14 of Rattus norvegicus (Rat).